The primary structure comprises 4036 residues: Hybrid PKS-NRPS synthetase iliA (4036 aa).

Residues 7–439 (PEPIAVIGSA…GTNAHAIIES (433 aa)) form the Ketosynthase family 3 (KS3) domain. Catalysis depends on for beta-ketoacyl synthase activity residues Cys-181, His-318, and His-359. Positions 561 to 886 (IFTGQGAQWP…LKRNGSDVEA (326 aa)) are malonyl-CoA:ACP transacylase (MAT) domain. Residues 955 to 1092 (HELLGRRTPD…GDLVVHLGAD (138 aa)) form an N-terminal hotdog fold region. The tract at residues 955 to 1262 (HELLGRRTPD…ATNMVGEQDA (308 aa)) is dehydratase (DH) domain. Positions 955–1263 (HELLGRRTPD…TNMVGEQDAS (309 aa)) constitute a PKS/mFAS DH domain. The active-site Proton acceptor; for dehydratase activity is His-987. The segment at 1109 to 1263 (LVNIDGERVY…TNMVGEQDAS (155 aa)) is C-terminal hotdog fold. Catalysis depends on Asp-1168, which acts as the Proton donor; for dehydratase activity. The interval 1402-1601 (EDDMLDRFYM…FSGADTVMHD (200 aa)) is methyltransferase (MT) domain. The segment at 2136–2277 (KTYFMVGMAG…SVATVIGNIG (142 aa)) is ketoreductase (KR) domain. The Carrier 1 domain occupies 2425–2502 (EAVAAVVKAF…QVCTWATKKV (78 aa)). Ser-2462 carries the O-(pantetheine 4'-phosphoryl)serine modification. Disordered regions lie at residues 2520–2583 (AEKT…KLGT) and 2597–2621 (DADA…NRPE). Residues 2530-2540 (APAPDAAPAPA) show a composition bias toward pro residues. Residues 2627 to 3054 (IMSQAQSRIW…HLDITECEIY (428 aa)) are condensation (C) domain. An adenylation (A) (KR) domain region spans residues 3088–3485 (SLHSDKSAVK…GTLLCLGRLD (398 aa)). The tract at residues 3088–3485 (SLHSDKSAVK…GTLLCLGRLD (398 aa)) is reductase (RED) domain. The 80-residue stretch at 3596 to 3675 (EKMTIREGEV…EMARRIDEHQ (80 aa)) folds into the Carrier 2 domain. Position 3635 is an O-(pantetheine 4'-phosphoryl)serine (Ser-3635).

In the C-terminal section; belongs to the NRP synthetase family.

The catalysed reaction is L-tyrosine + holo-[ACP] + 7 malonyl-CoA + acetyl-CoA + 8 AH2 + 2 S-adenosyl-L-methionine + ATP + 4 H(+) = N-[(4E,6E,10S,12Z,14E)-6,10-dimethyl-3-oxohexadeca-4,6,12,14-tetraenoyl]-L-tyrosyl-[ACP] + 8 A + AMP + 2 S-adenosyl-L-homocysteine + 7 CO2 + diphosphate + 8 CoA + 6 H2O. It functions in the pathway mycotoxin biosynthesis. Hybrid PKS-NRPS synthetase; part of the gene cluster that mediates the biosynthesis of ilicicolin H, a 4-hydroxy-2-pyridonealkaloid that has potent and broad antifungal activities by inhibiting the mitochondrial respiration chain. IliA assembles the backbone of ilicicolin H. The PKS portion and trans-acting enoyl reductase iliB work together to construct an octaketide, and two methyl groups are introduced by the MT domain during the chain assembly. The nascent chain is then condensed with tyrosine, catalyzed by the C domain, and the resulting PKS-NRPS hybrid is offloaded by the RED domain to form an advanced tetramic acid intermediate. The biosynthesis of ilicicolin H starts with formation of the tetramic acid by the hybrid PKS-NRPS synthetase iliA with the partnering trans-enoyl reductase iliB since iliA lacks a designated enoylreductase (ER) domain. The cytochrome P450 monooxygenase iliC then catalyzes the ring expansion of the tetramate to the acyclic 2-pyridone. The pericyclase iliD further converts the acyclic 2-pyridone into 8-epi-ilicicolin H. 8-epi-ilicicolin H might then spontaneously convert to ilicicolin H, since ilicicolin H is produced in the absence of the epimerase iliE, in contrast to what was observed for the Talaromyces variabilis ilicolin H biosynthetic pathway. This chain is Hybrid PKS-NRPS synthetase iliA, found in Neonectria sp. (strain DH2).